The following is a 329-amino-acid chain: Malate dehydrogenase 2 (329 aa).

NAD(+) is bound at residue G12–A18. Substrate-binding residues include R93 and R99. NAD(+) contacts are provided by residues N106, Q113, and V130–N132. The substrate site is built by N132 and R163. H188 functions as the Proton acceptor in the catalytic mechanism.

It belongs to the LDH/MDH superfamily. MDH type 2 family.

The enzyme catalyses (S)-malate + NAD(+) = oxaloacetate + NADH + H(+). Catalyzes the reversible oxidation of malate to oxaloacetate. This chain is Malate dehydrogenase 2, found in Burkholderia thailandensis (strain ATCC 700388 / DSM 13276 / CCUG 48851 / CIP 106301 / E264).